Here is a 142-residue protein sequence, read N- to C-terminus: MRAVVQRVTNARVTVSGRTVGQITRPGLVVLVGVTHTDTVRQAHALAVKVHELRILRGELSCAQTGAPILVVSQFTLYGDTRKGRRPSWDAAAPAATAEPLIEAFVAELRRRGAEVATGVFGADMLVELANDGPVTLVLDVD.

The Gly-cisPro motif, important for rejection of L-amino acids motif lies at 133-134 (GP).

The protein belongs to the DTD family. Homodimer.

Its subcellular location is the cytoplasm. The enzyme catalyses glycyl-tRNA(Ala) + H2O = tRNA(Ala) + glycine + H(+). It catalyses the reaction a D-aminoacyl-tRNA + H2O = a tRNA + a D-alpha-amino acid + H(+). In terms of biological role, an aminoacyl-tRNA editing enzyme that deacylates mischarged D-aminoacyl-tRNAs. Also deacylates mischarged glycyl-tRNA(Ala), protecting cells against glycine mischarging by AlaRS. Acts via tRNA-based rather than protein-based catalysis; rejects L-amino acids rather than detecting D-amino acids in the active site. By recycling D-aminoacyl-tRNA to D-amino acids and free tRNA molecules, this enzyme counteracts the toxicity associated with the formation of D-aminoacyl-tRNA entities in vivo and helps enforce protein L-homochirality. The sequence is that of D-aminoacyl-tRNA deacylase from Acidothermus cellulolyticus (strain ATCC 43068 / DSM 8971 / 11B).